A 309-amino-acid chain; its full sequence is Homoserine O-succinyltransferase (309 aa).

Cysteine 142 functions as the Acyl-thioester intermediate in the catalytic mechanism. Positions 163 and 192 each coordinate substrate. The active-site Proton acceptor is the histidine 235. Glutamate 237 is a catalytic residue. Arginine 249 is a binding site for substrate.

This sequence belongs to the MetA family.

The protein localises to the cytoplasm. The catalysed reaction is L-homoserine + succinyl-CoA = O-succinyl-L-homoserine + CoA. It functions in the pathway amino-acid biosynthesis; L-methionine biosynthesis via de novo pathway; O-succinyl-L-homoserine from L-homoserine: step 1/1. Functionally, transfers a succinyl group from succinyl-CoA to L-homoserine, forming succinyl-L-homoserine. The sequence is that of Homoserine O-succinyltransferase from Klebsiella pneumoniae (strain 342).